Reading from the N-terminus, the 394-residue chain is Chalcone synthase 2 (394 aa).

Cysteine 167 is an active-site residue.

The protein belongs to the thiolase-like superfamily. Chalcone/stilbene synthases family.

It carries out the reaction (E)-4-coumaroyl-CoA + 3 malonyl-CoA + 3 H(+) = 2',4,4',6'-tetrahydroxychalcone + 3 CO2 + 4 CoA. Its pathway is secondary metabolite biosynthesis; flavonoid biosynthesis. Its function is as follows. The primary product of this enzyme is 4,2',4',6'-tetrahydroxychalcone (also termed naringenin-chalcone or chalcone) which can under specific conditions spontaneously isomerize into naringenin. This is Chalcone synthase 2 (CHS2) from Secale cereale (Rye).